The chain runs to 332 residues: DNA-directed RNA polymerase subunit alpha (332 aa).

Positions 2–234 are alpha N-terminal domain (alpha-NTD); sequence TVTANQVLRP…DQLSVFGDFT (233 aa). The alpha C-terminal domain (alpha-CTD) stretch occupies residues 248 to 332; sequence VDPVLLRPID…AGVAQHGMLG (85 aa).

Belongs to the RNA polymerase alpha chain family. As to quaternary structure, homodimer. The RNAP catalytic core consists of 2 alpha, 1 beta, 1 beta' and 1 omega subunit. When a sigma factor is associated with the core the holoenzyme is formed, which can initiate transcription.

It catalyses the reaction RNA(n) + a ribonucleoside 5'-triphosphate = RNA(n+1) + diphosphate. DNA-dependent RNA polymerase catalyzes the transcription of DNA into RNA using the four ribonucleoside triphosphates as substrates. The protein is DNA-directed RNA polymerase subunit alpha of Xanthomonas axonopodis pv. citri (strain 306).